Reading from the N-terminus, the 114-residue chain is Cytokine SCM-1 beta (114 aa).

The N-terminal stretch at 1–21 (MRLLILALLGICSLTAYIVEG) is a signal peptide. A disulfide bond links C32 and C69. The disordered stretch occupies residues 91 to 114 (RNNMIQTKPTGTQQSTNTAVTLTG).

Belongs to the intercrine gamma family.

Its subcellular location is the secreted. In terms of biological role, chemotactic activity for lymphocytes but not for monocytes or neutrophils. This chain is Cytokine SCM-1 beta (XCL2), found in Homo sapiens (Human).